A 544-amino-acid polypeptide reads, in one-letter code: Methionine--tRNA ligase (544 aa).

A 'HIGH' region motif is present at residues Pro10–His20. Positions 141, 144, 153, and 156 each coordinate Zn(2+). The 'KMSKS' region motif lies at Lys329–Ser333. Thr332 contributes to the ATP binding site.

This sequence belongs to the class-I aminoacyl-tRNA synthetase family. MetG type 1 subfamily. In terms of assembly, monomer. The cofactor is Zn(2+).

The protein localises to the cytoplasm. The enzyme catalyses tRNA(Met) + L-methionine + ATP = L-methionyl-tRNA(Met) + AMP + diphosphate. Is required not only for elongation of protein synthesis but also for the initiation of all mRNA translation through initiator tRNA(fMet) aminoacylation. The polypeptide is Methionine--tRNA ligase (Bacillus cereus (strain AH187)).